Consider the following 664-residue polypeptide: MKRVTITIDGEQTKGIVIGTIAANHTAAEWLLTASVSAKSAKVRFDPEEAVAETSSLVMIAPTRTEKYLYLVPDEQVQPVTTIVRKYGLLSPLDWDCPDYPAGDAFEHLFLQNKLWNDLVTIEREHRAKYRELIGSDEETAQMDTEIASIKDRLSVLDEGRKKLRVEHRKKKCPEIDCLDENIKKLKSELKAVASKAKETRAAAKDRIRAAGNDIENLEKDRQAAVIKAYNNSGLWWGNYNAVLESYKKARIKALKDGAELKYHRFDGSGRFTNQIQGGMSVQDLLEGNRNVASLRLVSSGELGDISGKKPPSLDLQSVGSRRDSREYGILAITLYTGTDEQSKKFRRTLSFPVILHRPLPEGATLKSLSVHRKRVGTDFVWSVVFTFTTDCPTYDQRSSTGNRCGLNLGWKKQAGGGLRVATIYDGSDARHITLPQAIIDGLDYVNGDLQGRIDSAANENHAWLLEQWGGDELPESLQELRSMLRRSKRPHPAKFAKAVIAWRNYPEYLGDARDEAEQRRKATKRLTIEMAHKREKLLRRRMDFYRNTAKQLTSVYDVICLDKMDLRRLALLEKGDGTPNELTKIARKQRQQAAISELRECLSKAAAKNGTQIEQVSTASSATCSACKGKMEQVDGIMWRCRECRALVDQDINAAANLFREVL.

Residues 1-137 form a recognition domain (REC1-N) region; it reads MKRVTITIDG…AKYRELIGSD (137 aa). Positions 138–212 are recognition domain (REC2); that stretch reads EETAQMDTEI…AAKDRIRAAG (75 aa). Positions 213–270 are recognition domain (REC1-C); the sequence is NDIENLEKDRQAAVIKAYNNSGLWWGNYNAVLESYKKARIKALKDGAELKYHRFDGSG. The interval 271-390 is wedge domain (WED); it reads RFTNQIQGGM…VWSVVFTFTT (120 aa). The linker stretch occupies residues 391 to 404; the sequence is DCPTYDQRSSTGNR. The tract at residues 405–618 is ruvC-I; that stretch reads CGLNLGWKKQ…KNGTQIEQVS (214 aa). The interval 618–650 is target nucleic-acid binding (TNB); that stretch reads STASSATCSACKGKMEQVDGIMWRCRECRALVD. Residues C625, C628, C642, and C645 each contribute to the Zn(2+) site. Residues 651–664 are ruvC-II; sequence QDINAAANLFREVL. D652 provides a ligand contact to Mg(2+).

Belongs to the CRISPR-associated DNA-binding protein Cas12m family. Mg(2+) serves as cofactor. Zn(2+) is required as a cofactor.

CRISPR (clustered regularly interspaced short palindromic repeat), is an adaptive immune system that provides protection against mobile genetic elements (viruses, transposable elements and conjugative plasmids). CRISPR clusters contain sequences complementary to antecedent mobile elements and target invading nucleic acids. CRISPR clusters are transcribed and processed into CRISPR RNA (crRNA). Recognizes a short motif in the CRISPR repeat sequences (the 5' PAM or protospacer adjacent motif, 5'-CCN-3' in this organism) to help distinguish self versus nonself, as targets within the bacterial CRISPR locus do not have PAMs. Cas12m-crRNA binds DNA in a PAM-dependent, crRNA-guided fashion. DNA-binding probably inhibits transcription, leading to gene silencing. Upon expression in E.coli as a CRISPR region preferentially binds to its associated crRNA. Probably required for pre-crRNA processing to mature crRNA. This is CRISPR-associated DNA-binding protein Cas12m from Pelobacter propionicus (strain DSM 2379 / NBRC 103807 / OttBd1).